The primary structure comprises 610 residues: DNA mismatch repair protein MutL (610 aa).

The protein belongs to the DNA mismatch repair MutL/HexB family.

Its function is as follows. This protein is involved in the repair of mismatches in DNA. It is required for dam-dependent methyl-directed DNA mismatch repair. May act as a 'molecular matchmaker', a protein that promotes the formation of a stable complex between two or more DNA-binding proteins in an ATP-dependent manner without itself being part of a final effector complex. In Rickettsia conorii (strain ATCC VR-613 / Malish 7), this protein is DNA mismatch repair protein MutL.